The sequence spans 362 residues: 3-dehydroquinate synthase (362 aa).

NAD(+) is bound by residues 70–75 (DGEKYK), 104–108 (GVIGD), 128–129 (TT), Lys-141, Lys-150, and 168–171 (TLNT). Zn(2+) contacts are provided by Glu-183, His-246, and His-263.

It belongs to the sugar phosphate cyclases superfamily. Dehydroquinate synthase family. Co(2+) serves as cofactor. It depends on Zn(2+) as a cofactor. NAD(+) is required as a cofactor.

The protein localises to the cytoplasm. The catalysed reaction is 7-phospho-2-dehydro-3-deoxy-D-arabino-heptonate = 3-dehydroquinate + phosphate. It functions in the pathway metabolic intermediate biosynthesis; chorismate biosynthesis; chorismate from D-erythrose 4-phosphate and phosphoenolpyruvate: step 2/7. Its function is as follows. Catalyzes the conversion of 3-deoxy-D-arabino-heptulosonate 7-phosphate (DAHP) to dehydroquinate (DHQ). The chain is 3-dehydroquinate synthase from Haemophilus influenzae (strain 86-028NP).